Reading from the N-terminus, the 132-residue chain is Venom CUB domain-containing protein 2 (132 aa).

The N-terminal stretch at 1-17 (MKTLFLAIALFSAVALA) is a signal peptide. Residues 22–129 (ESAELVPGGE…RGFVACKATA (108 aa)) form the CUB domain. 2 disulfides stabilise this stretch: C66-C125 and C77-C94.

The protein belongs to the venom CUB family. Expressed by the venom gland (posterior main gland) (at protein level).

The protein localises to the secreted. This Platymeris rhadamanthus (Red spot assassin bug) protein is Venom CUB domain-containing protein 2.